Here is a 71-residue protein sequence, read N- to C-terminus: Small ribosomal subunit protein bS21 (71 aa).

The segment covering 50-59 has biased composition (basic residues); it reads AAAVKRHAKK. Positions 50–71 are disordered; it reads AAAVKRHAKKVQREQRRAVRLY. Positions 60-71 are enriched in basic and acidic residues; that stretch reads VQREQRRAVRLY.

Belongs to the bacterial ribosomal protein bS21 family.

This is Small ribosomal subunit protein bS21 from Pseudomonas entomophila (strain L48).